A 416-amino-acid chain; its full sequence is Deferrochelatase (416 aa).

The tat-type signal signal peptide spans 1–28 (MSDEQKKPEQIHRRDILKWGAMAGAAVA). Heme b is bound at residue 241 to 243 (GTG). Residues 293-318 (QEDTFGRRKSSGAPFGQKKETDPVKL) are disordered. Residues histidine 326 and arginine 339 each contribute to the heme b site.

It belongs to the DyP-type peroxidase family. Component of the iron transporter efeUOB/M complex composed of EfeU, EfeM and EfeB; EfeU is essential for the complex formation. Heme b serves as cofactor. In terms of processing, exported by the Tat system. The position of the signal peptide cleavage has not been experimentally proven.

The protein resides in the secreted. It localises to the cell membrane. It catalyses the reaction heme b + 2 H(+) = protoporphyrin IX + Fe(2+). The catalysed reaction is 2 Fe(2+) + H2O2 + 2 H(+) = 2 Fe(3+) + 2 H2O. Functionally, involved in the recovery of exogenous heme iron. Extracts iron from heme while preserving the protoporphyrin ring intact. Part of the iron transporter system efeUOB/M involved in iron import. Catalyzes the peroxide-mediated oxidation of Fe(2+) into Fe(3+); EfeM binds Fe(3+) and delivers it to the cell membrane permease EfeU. In Bacillus subtilis (strain 168), this protein is Deferrochelatase.